A 2090-amino-acid chain; its full sequence is Non-reducing polyketide synthase rdc1 (2090 aa).

Positions 12–250 (FLVGDQVDSW…NPLNIHALQH (239 aa)) are N-terminal acylcarrier protein transacylase (SAT) domain. A Ketosynthase family 3 (KS3) domain is found at 375–808 (TGRIAIVGMS…GGNACLLLED (434 aa)). Catalysis depends on for beta-ketoacyl synthase activity residues Cys-551, His-686, and His-726. A malonyl-CoA:ACP transacylase (MAT) domain region spans residues 912–1195 (IFVFSGQGSH…NQVCTQFVRA (284 aa)). The For acyl/malonyl transferase activity role is filled by Ser-1003. The segment at 1293 to 1433 (QHVAKESSSN…LVVQKNVKAL (141 aa)) is N-terminal hotdog fold. The region spanning 1293-1607 (QHVAKESSSN…FVRISNALLQ (315 aa)) is the PKS/mFAS DH domain. The tract at residues 1304–1604 (GKLEITFRAS…NLSFVRISNA (301 aa)) is product template (PT) domain. A C-terminal hotdog fold region spans residues 1459 to 1607 (QGHWLKHDIF…FVRISNALLQ (149 aa)). Residues 1615–1650 (SKPVGRGMAKQEKQEVPATTEVVRQPEKEESRHSVD) are disordered. Basic and acidic residues predominate over residues 1638 to 1649 (RQPEKEESRHSV). Positions 1649–1726 (VDTPSFSDVL…DIKRAFDILT (78 aa)) constitute a Carrier domain. O-(pantetheine 4'-phosphoryl)serine is present on Ser-1686. The interval 1820-1964 (ADGTGSIATY…THQHLKALFA (145 aa)) is thioesterase (TE) domain.

Its pathway is secondary metabolite biosynthesis. Non-reducing polyketide synthase; part of the gene cluster that mediates the biosynthesis of radicicol, a resorcylic acid lactone (RAL) that irreversibly inhibits the HSP90 molecular chaperone, an important target for cancer chemotherapy. The radicicol cluster encodes only two apparent post-PKS enzymes, a cytochrome P450 monooxygenase (rdc4) and a non-heme halogenase (rdc2) that could introduce the epoxide and the chlorine, respectively. If this cluster includes all the genes required for radicicol biosynthesis, the remaining structural features of radicicol are presumably generated by the PKSs rdc1 and rdc5. The C-2' ketone could arise if the R-PKS rdc5 and NR-PKS rdc1 each carry out four iterations, in contrast to the five iteration-three iteration split for the hypothemycin PKSs. The origin of the cis 5',6' double bond is not known. The radicicol R-PKS rdc5 ER domain may catalyze either double bond isomerization or reduction in the third iteration. The polypeptide is Non-reducing polyketide synthase rdc1 (Metacordyceps chlamydosporia (Nematophagous fungus)).